A 600-amino-acid chain; its full sequence is Protein GPR107 (600 aa).

An N-terminal signal peptide occupies residues 1–39 (MAALAPVGSPASRGPRLAAGLRLLPMLGLLQLLAEPGLG). At 40–263 (RVHHLALKDD…YLSAGEIPLP (224 aa)) the chain is on the extracellular side. N-linked (GlcNAc...) asparagine glycans are attached at residues Asn70 and Asn169. A disulfide bridge connects residues Cys109 and Cys228. Residues 157–175 (SQEPNVNPASAGNQTQKTQ) are compositionally biased toward polar residues. Residues 157 to 185 (SQEPNVNPASAGNQTQKTQDGGKSKRSTV) form a disordered region. A compositionally biased stretch (basic and acidic residues) spans 176–185 (DGGKSKRSTV). Asn211 carries an N-linked (GlcNAc...) asparagine glycan. Residues 264–284 (KLYISMAFFFFLSGTIWIHIL) form a helical membrane-spanning segment. The Cytoplasmic portion of the chain corresponds to 285–293 (RKRRNDVFK). A helical transmembrane segment spans residues 294 to 314 (IHWLMAALPFTKSLSLVFHAI). The Extracellular portion of the chain corresponds to 315 to 337 (DYHYISSQGFPIEGWAVVYYITH). The chain crosses the membrane as a helical span at residues 338 to 358 (LLKGALLFITIALIGTGWAFI). The Cytoplasmic segment spans residues 359-368 (KHILSDKDKK). The chain crosses the membrane as a helical span at residues 369-389 (IFMIVIPLQVLANVAYIIIES). Topologically, residues 390-402 (TEEGTTEYGLWKD) are extracellular. The helical transmembrane segment at 403 to 423 (SLFLVDLLCCGAILFPVVWSI) threads the bilayer. Residues 424 to 498 (RHLQEASATD…AKLKLFRHYY (75 aa)) lie on the Cytoplasmic side of the membrane. The chain crosses the membrane as a helical span at residues 499–519 (VLIVCYIYFTRIIAFLLKLAV). At 520–524 (PFQWK) the chain is on the extracellular side. A helical membrane pass occupies residues 525–544 (WLYQLLDETATLVFFVLTGY). Residues 545–600 (KFRPASDNPYLQLSQEEEDLEMESVVTTSGVMESMKKVKKVTNGSVEPQGEWEGAV) lie on the Cytoplasmic side of the membrane.

It belongs to the LU7TM family. Post-translationally, cleaved by FURIN to yield two fragments of 17 and 35 kDa that remain associated via a disulfide bond.

It is found in the cell membrane. The protein localises to the golgi apparatus. The protein resides in the trans-Golgi network membrane. Its function is as follows. Has been proposed to act as a receptor for neuronostatin, a peptide derived from the somatostatin/SST precursor. Involved in blood sugar regulation through the induction of glucagon in response to low glucose. Functionally, (Microbial infection) Required for intoxication by Pseudomonas aeruginosa exotoxin A and Campylobacter jejuni CDT. May contribute to the retrograde transport of bacterial toxins, including cholera toxin, from the trans-Golgi network to the endoplasmic reticulum. In Homo sapiens (Human), this protein is Protein GPR107 (GPR107).